A 208-amino-acid chain; its full sequence is NAD(P)H dehydrogenase (quinone) (208 aa).

The Flavodoxin-like domain occupies 4-192 (VLVLYYSSYG…DGARFQGRHV (189 aa)). FMN contacts are provided by residues 10–15 (SSYGHV) and 78–80 (TRF). An NAD(+)-binding site is contributed by tyrosine 12. A substrate-binding site is contributed by tryptophan 98. Residues 113 to 119 (STGSQHG) and histidine 134 contribute to the FMN site. The disordered stretch occupies residues 161 to 183 (YGASTLADDGDGGDRQPSANELD).

The protein belongs to the WrbA family. FMN is required as a cofactor.

It carries out the reaction a quinone + NADH + H(+) = a quinol + NAD(+). The enzyme catalyses a quinone + NADPH + H(+) = a quinol + NADP(+). The chain is NAD(P)H dehydrogenase (quinone) from Paracoccus denitrificans (strain Pd 1222).